A 555-amino-acid polypeptide reads, in one-letter code: Xylulose kinase (555 aa).

Substrate contacts are provided by His88, Arg158, Asp274, and Asn275. ATP-binding positions include Trp357, 455–456, and Asn459; that span reads GA.

This sequence belongs to the FGGY kinase family.

Its subcellular location is the cytoplasm. The catalysed reaction is D-xylulose + ATP = D-xylulose 5-phosphate + ADP + H(+). The polypeptide is Xylulose kinase (Schizosaccharomyces pombe (strain 972 / ATCC 24843) (Fission yeast)).